The primary structure comprises 548 residues: Thermostable neutral protease NprT (548 aa).

The first 25 residues, 1-25, serve as a signal peptide directing secretion; sequence MNKRAMLGAIGLAFGLLAAPIGASA. Residues 26–229 constitute a propeptide, activation peptide; it reads KGESIVWNEQ…DSRQPGGGQP (204 aa). Positions 289, 291, 293, and 370 each coordinate Ca(2+). Histidine 374 contacts Zn(2+). Glutamate 375 is a catalytic residue. 2 residues coordinate Zn(2+): histidine 378 and glutamate 398. Ca(2+)-binding residues include glutamate 409, asparagine 415, aspartate 417, glutamate 419, glutamate 422, tyrosine 425, threonine 426, valine 429, and aspartate 432. The Proton donor role is filled by histidine 463.

Belongs to the peptidase M4 family. It depends on Ca(2+) as a cofactor. Zn(2+) is required as a cofactor.

The protein localises to the secreted. With respect to regulation, its casein hydrolytic activity is inhibited almost completely by a chelating agent (EDTA), whereas neither diisopropyl fluorophosphate nor phenylmethylsulfonyl fluoride inhibit the proteolytic activity in vitro. Functionally, extracellular zinc metalloprotease. The chain is Thermostable neutral protease NprT (nprT) from Geobacillus stearothermophilus (Bacillus stearothermophilus).